The primary structure comprises 165 residues: Chemotaxis protein CheW (165 aa).

The protein belongs to the CheW family.

In terms of biological role, plays an essential role in chemotaxis signal transduction system in order to colonize the host stomach. In Helicobacter pylori (strain ATCC 700392 / 26695) (Campylobacter pylori), this protein is Chemotaxis protein CheW.